The primary structure comprises 362 residues: Chorismate synthase (362 aa).

Residues 39 to 59 (ADLQGDLDRRKPGTSRYTTPR) are disordered. R48 and R54 together coordinate NADP(+). FMN is bound by residues 125-127 (RSS), 238-239 (NA), G278, 293-297 (KPTSS), and R319.

This sequence belongs to the chorismate synthase family. Homotetramer. It depends on FMNH2 as a cofactor.

It carries out the reaction 5-O-(1-carboxyvinyl)-3-phosphoshikimate = chorismate + phosphate. It participates in metabolic intermediate biosynthesis; chorismate biosynthesis; chorismate from D-erythrose 4-phosphate and phosphoenolpyruvate: step 7/7. In terms of biological role, catalyzes the anti-1,4-elimination of the C-3 phosphate and the C-6 proR hydrogen from 5-enolpyruvylshikimate-3-phosphate (EPSP) to yield chorismate, which is the branch point compound that serves as the starting substrate for the three terminal pathways of aromatic amino acid biosynthesis. This reaction introduces a second double bond into the aromatic ring system. In Aeromonas hydrophila subsp. hydrophila (strain ATCC 7966 / DSM 30187 / BCRC 13018 / CCUG 14551 / JCM 1027 / KCTC 2358 / NCIMB 9240 / NCTC 8049), this protein is Chorismate synthase.